We begin with the raw amino-acid sequence, 317 residues long: Protein lifeguard 2 (317 aa).

The segment at 1-54 (MTQGKLSVANKAPGTEGQQHQANGEKKDAPAVPSAPPSYEEATSGEGLKAGTFP) is disordered. 3 helical membrane-spanning segments follow: residues 107 to 127 (VYTI…LFTF), 139 to 159 (PGWY…LACC), and 166 to 186 (FPWN…LTGM). Asn192 is a glycosylation site (N-linked (GlcNAc...) asparagine). Helical transmembrane passes span 195-215 (SVLL…IFSF), 226-246 (GVLF…AVLL), 252-272 (PWLH…FLAF), and 291-311 (IFGA…FLQL).

The protein belongs to the BI1 family. LFG subfamily. As to quaternary structure, interacts with FAS/TNFRSF6 and BAX. As to expression, brain. Highly expressed in cerebellum, also found in cortex, olfactory bulb, and hippocampus.

Its subcellular location is the cell membrane. It is found in the membrane raft. It localises to the postsynaptic cell membrane. Functionally, antiapoptotic protein which protects cells uniquely from Fas-induced apoptosis. Regulates Fas-mediated apoptosis in neurons by interfering with caspase-8 activation. Plays a role in cerebellar development by affecting cerebellar size, internal granular layer (IGL) thickness, and Purkinje cell (PC) development. The chain is Protein lifeguard 2 (Faim2) from Mus musculus (Mouse).